Reading from the N-terminus, the 363-residue chain is Carbamoyl phosphate synthase small chain (363 aa).

The segment at 1 to 171 is CPSase; the sequence is MEDGTLFAGA…PYRIPGPGPR (171 aa). Residues Ser39, Gly219, and Gly221 each contribute to the L-glutamine site. Residues 171 to 359 enclose the Glutamine amidotransferase type-1 domain; the sequence is RVVAVDFGAK…LALVDRSAVS (189 aa). The active-site Nucleophile is Cys248. Residues Leu249, Gln252, Asn290, Gly292, and Tyr293 each contribute to the L-glutamine site. Catalysis depends on residues His332 and Glu334.

The protein belongs to the CarA family. In terms of assembly, composed of two chains; the small (or glutamine) chain promotes the hydrolysis of glutamine to ammonia, which is used by the large (or ammonia) chain to synthesize carbamoyl phosphate. Tetramer of heterodimers (alpha,beta)4.

The catalysed reaction is hydrogencarbonate + L-glutamine + 2 ATP + H2O = carbamoyl phosphate + L-glutamate + 2 ADP + phosphate + 2 H(+). It carries out the reaction L-glutamine + H2O = L-glutamate + NH4(+). It participates in amino-acid biosynthesis; L-arginine biosynthesis; carbamoyl phosphate from bicarbonate: step 1/1. The protein operates within pyrimidine metabolism; UMP biosynthesis via de novo pathway; (S)-dihydroorotate from bicarbonate: step 1/3. Small subunit of the glutamine-dependent carbamoyl phosphate synthetase (CPSase). CPSase catalyzes the formation of carbamoyl phosphate from the ammonia moiety of glutamine, carbonate, and phosphate donated by ATP, constituting the first step of 2 biosynthetic pathways, one leading to arginine and/or urea and the other to pyrimidine nucleotides. The small subunit (glutamine amidotransferase) binds and cleaves glutamine to supply the large subunit with the substrate ammonia. The polypeptide is Carbamoyl phosphate synthase small chain (Symbiobacterium thermophilum (strain DSM 24528 / JCM 14929 / IAM 14863 / T)).